We begin with the raw amino-acid sequence, 80 residues long: uncharacterized protein (80 aa).

This is an uncharacterized protein from Methanothermobacter thermautotrophicus (Methanobacterium thermoformicicum).